The sequence spans 214 residues: Single-pass membrane and coiled-coil domain-containing protein 1 (214 aa).

The stretch at 5–40 (TTTLISLKEAMKRVDNKLRALDTQFKELDVTKDNLT) forms a coiled coil. Residues 59 to 81 (IWTAALALGFTSMELNIVYSYVI) form a helical membrane-spanning segment. The tract at residues 193–214 (KQAQDPENSRAPLKELMPPVKD) is disordered.

The protein localises to the membrane. This Mus musculus (Mouse) protein is Single-pass membrane and coiled-coil domain-containing protein 1 (Smco1).